The sequence spans 424 residues: UPF0229 protein Ping_2705 (424 aa).

The segment at Pro-77–Lys-108 is disordered.

It belongs to the UPF0229 family.

This chain is UPF0229 protein Ping_2705, found in Psychromonas ingrahamii (strain DSM 17664 / CCUG 51855 / 37).